A 568-amino-acid chain; its full sequence is PCNA-interacting partner (568 aa).

A disordered region spans residues 442 to 555 (QIPTCVHPAP…RNNKAVSKKL (114 aa)). Positions 488-500 (NAWNQTGGKSTQP) are enriched in polar residues. The segment covering 515-527 (ANRECTEQGREEN) has biased composition (basic and acidic residues).

The protein belongs to the PARI family.

It localises to the cytoplasm. The protein localises to the nucleus. Required to suppress inappropriate homologous recombination, thereby playing a central role DNA repair and in the maintenance of genomic stability. In Danio rerio (Zebrafish), this protein is PCNA-interacting partner (parpbp).